The sequence spans 257 residues: MTDRQGLLTDRIALITGASSGIGAAQRGLFAREGAAVVVTARREERLAGLVDELRAQGARAAYVVADVTRSEDAVRAVEFTVERFGRLDAAFNKRRHGAGRTPLHLMDDPVYDDIMDTNVRGVFNCLRPEIAAMLASGAGGSIVNTSSTGGLVATPVAAPYVVSKHAVLGLTKGPAAEYGAHGIRVNAIAPGTTRSEMVADWFAQNPDAEELLHRATPQPRTAEPQEIAEAAAWLCSERASFVTGSTLVVDGGFTIL.

Tyr161 serves as the catalytic Proton acceptor.

Belongs to the short-chain dehydrogenases/reductases (SDR) family. As to quaternary structure, homodimer.

It catalyses the reaction a (3R,4R)-3-[(1S)-1-hydroxyalkyl]-4-(hydroxymethyl)oxolan-2-one + NADP(+) = a (3R,4R)-3-alkanoyl-4-(hydroxymethyl)oxolan-2-one + NADPH + H(+). In terms of biological role, involved in the biosynthesis of virginiae butanolide (VB), which regulates the production of antibiotic virginiamycin. Catalyzes the reduction of 6-dehydro-VB-A to VB-A, the last catalytic step in VB biosynthesis. In vitro, can use various synthetic A-factor-type analogs. In Streptomyces virginiae (Streptomyces cinnamonensis), this protein is A-factor type gamma-butyrolactone 1'-reductase (1S-forming).